Here is a 447-residue protein sequence, read N- to C-terminus: C4-dicarboxylate transport protein (447 aa).

Transmembrane regions (helical) follow at residues 13–33, 49–69, 81–101, 149–169, 189–209, 227–247, 302–322, 336–356, and 357–377; these read SLYFQVITAIVIGVLLGHYWP, LIKMIIAPIIFCTVVVGIAGM, LALLYFEVVSTLALLLGLLIV, AFAKGEMLQVLLFSVMFGFAL, VLFAIVGFIMKVAPIGAFGAM, LMGTFYATCLVFIFGVLGLIA, GYSFNLDGTSIYLTMAAVFIA, TLLAVLLLTSKGAAGVTGSGF, and IVLAATLSAVGGVPVAGLALI. The segment at 422–447 is disordered; the sequence is ETEAEANEPEAVLDEIDQHMPVPAAR. Positions 425–436 are enriched in acidic residues; the sequence is AEANEPEAVLDE.

Belongs to the dicarboxylate/amino acid:cation symporter (DAACS) (TC 2.A.23) family.

Its subcellular location is the cell inner membrane. Its function is as follows. Responsible for the transport of dicarboxylates such as succinate, fumarate, and malate from the periplasm across the membrane. The polypeptide is C4-dicarboxylate transport protein (Leptothrix cholodnii (strain ATCC 51168 / LMG 8142 / SP-6) (Leptothrix discophora (strain SP-6))).